A 167-amino-acid chain; its full sequence is uncharacterized protein (167 aa).

It is found in the mitochondrion. This is an uncharacterized protein from Ascobolus immersus.